The sequence spans 373 residues: tRNA-specific 2-thiouridylase MnmA (373 aa).

ATP is bound by residues 12–19 (GMSGGVDS) and M38. The segment at 98-100 (NPD) is interaction with target base in tRNA. C103 serves as the catalytic Nucleophile. C103 and C200 are joined by a disulfide. G127 is a binding site for ATP. The interaction with tRNA stretch occupies residues 150–152 (KDQ). The active-site Cysteine persulfide intermediate is C200. The interaction with tRNA stretch occupies residues 312–313 (RY).

The protein belongs to the MnmA/TRMU family.

Its subcellular location is the cytoplasm. The enzyme catalyses S-sulfanyl-L-cysteinyl-[protein] + uridine(34) in tRNA + AH2 + ATP = 2-thiouridine(34) in tRNA + L-cysteinyl-[protein] + A + AMP + diphosphate + H(+). Its function is as follows. Catalyzes the 2-thiolation of uridine at the wobble position (U34) of tRNA, leading to the formation of s(2)U34. The protein is tRNA-specific 2-thiouridylase MnmA of Streptococcus pyogenes serotype M12 (strain MGAS2096).